The following is a 223-amino-acid chain: Protein DEHYDRATION-INDUCED 19 homolog 3 (223 aa).

Residue threonine 114 is modified to Phosphothreonine. Position 116 is a phosphoserine (serine 116).

It belongs to the Di19 family. In terms of processing, phosphorylated in vitro by CPK3 or CPK11. As to expression, expressed in seedlings, roots, leaves, stems, flowers and siliques.

The protein localises to the nucleus. This chain is Protein DEHYDRATION-INDUCED 19 homolog 3 (DI19-3), found in Arabidopsis thaliana (Mouse-ear cress).